The sequence spans 218 residues: Pyridoxine/pyridoxamine 5'-phosphate oxidase (218 aa).

Residues 14–17 (RREY) and K72 contribute to the substrate site. FMN contacts are provided by residues 67–72 (RIVLLK), 82–83 (YT), R88, K89, and Q111. Residues Y129, R133, and S137 each coordinate substrate. FMN-binding positions include 146–147 (QS) and W191. Substrate is bound at residue 197-199 (RLH). Position 201 (R201) interacts with FMN.

The protein belongs to the pyridoxamine 5'-phosphate oxidase family. Homodimer. FMN is required as a cofactor.

It carries out the reaction pyridoxamine 5'-phosphate + O2 + H2O = pyridoxal 5'-phosphate + H2O2 + NH4(+). The enzyme catalyses pyridoxine 5'-phosphate + O2 = pyridoxal 5'-phosphate + H2O2. Its pathway is cofactor metabolism; pyridoxal 5'-phosphate salvage; pyridoxal 5'-phosphate from pyridoxamine 5'-phosphate: step 1/1. It participates in cofactor metabolism; pyridoxal 5'-phosphate salvage; pyridoxal 5'-phosphate from pyridoxine 5'-phosphate: step 1/1. Its function is as follows. Catalyzes the oxidation of either pyridoxine 5'-phosphate (PNP) or pyridoxamine 5'-phosphate (PMP) into pyridoxal 5'-phosphate (PLP). The polypeptide is Pyridoxine/pyridoxamine 5'-phosphate oxidase (Klebsiella pneumoniae subsp. pneumoniae (strain ATCC 700721 / MGH 78578)).